Reading from the N-terminus, the 150-residue chain is Copper transporter 3 (150 aa).

2 helical membrane passes run 50–70 (GGMY…LEFL) and 100–120 (LAYL…LAAV).

Belongs to the copper transporter (Ctr) (TC 1.A.56) family. SLC31A subfamily.

It localises to the membrane. In terms of biological role, involved in the transport of copper. This chain is Copper transporter 3 (COPT3), found in Oryza sativa subsp. japonica (Rice).